The following is a 1793-amino-acid chain: MESQQLSNYPHISHGSACASVTSKEVHTNQDPLDVSASKIQEYDKASTKANSQQTTTPASSAVPENLHHASPQPASVPPPQNGPYPQQCMMTQNQANPSGWSFYGHPSMIPYTPYQMSPMYFPPGPQSQFPQYPSSVGTPLSTPSPESGNTFTDSSSADSDMTSTKKYVRPPPMLTSPNDFPNWVKTYIKFLQNSNLGGIIPTVNGKPVPPMLTSPNDFPNWVKTYIKFLQNSNLGGIIPTVNGKPVRQITDDELTFLYNTFQIFAPSQFLPTWVKDILSVDYTDIMKILSKSIEKMQSDTQEANDIVTLANLQYNGSTPADAFETKVTNIIDRLNNNGIHINNKVACQLIMRGLSGEYKFLRYTRHRHLNMTVAELFLDIHAIYEEQQGSRNSKPNYRRNPSDEKNDSRSYTNTTKPKVIARNPQKTNNSKSKTARAHNVSTSNNSPSTDNDSISKSTTEPIQLNNKHDLHLGQKLTESTVNHTNHSDDELPGHLLLDSGASRTLIRSAHHIHSASSNPDINVVDAQKRNIPINAIGDLQFHFQDNTKTSIKVLHTPNIAYDLLSLNELAAVDITACFTKNVLERSDGTVLAPIVKYGDFYWVSKKYLLPSNISVPTINNVHTSESTRKYPYPFIHRMLAHANAQTIRYSLKNNTITYFNESDVDWSSAIDYQCPDCLIGKSTKHRHIKGSRLKYQNSYEPFQYLHTDIFGPVHNLPKSAPSYFISFTDETTKFRWVYPLHDRREDSILDVFTTILAFIKNQFQASVLVIQMDRGSEYTNRTLHKFLEKNGITPCYTTTADSRAHGVAERLNRTLLDDCRTQLQCSGLPNHLWFSAIEFSTIVRNSLASPKSKKSARQHAGLAGLDISTLLPFGQPVIVNDHNPNSKIHPRGIPGYALHPSRNSYGYIIYLPSLKKTVDTTNYVILQGKESRLDQFNYDALTFDEDLNRLTASYHSFIASNEIQQSNDLNIESDHDFQSDIELHPEQLRNVLSKAVSPTDSTPPSTHTEDSKRVSKTNIRAPREVDPNISESNILPSKKRSSTPQISDIESTGSGGMHRLDVPLLAPMSQSNTHESSHASKSKDFRHSDSYSDNETNHTNVPISSTGGTNNKTVPQTSEQETEKRIIHRSPSIDTSSSESNSLHHVVPIKTSDTCPKENTEESIIADLPLPDLPPEPPTELSDSFKELPPINSHQTNSSLGGIGDSNAYTTINSKKRSLEDNETEIKVSRDTWNTKNMRSLEPPRSKKRIHLIAAVKAVKSIKPIRTTLRYDEAITYNKDIKEKEKYIQAYHKEVNQLLMMKTWDTDRYYDRKEIDPKRVINSMFIFNRKRDGTHKARFVARGDIQHPDTYDPGMQSNTVHHYALMTSLSLALDNNYYITQLDISSAYLYADIKEELYIRPPPHLGMNDKLIRLKKSLYGLKQSGANWYETIKSYLIKQCGMEEVRGWSCVFKNSQVTICLFVDDMILFSKDLNANKKIITTLKKQYDTKIINLGESDNEIQYDILGLEIKYQRGKYMKLGMENSLTEKIPKLNVPLNPKGRKLSAPGQPGLYIDQDELEIDEDEYKEKVHEMQKLIGLASYVGYKFRFDLLYYINTLAQHILFPSRQVLDMTYELIQFMWDTRDKQLIWHKNKPTEPDNKLVAISDASYGNQPYYKSQIGNIYLLNGKVIGGKSTKASLTCTSTTEAEIHAISESVPLLNNLSHLVQELNKKPITKGLLTDSKSTISIIISNNEEKFRNRFFGTKAMRLRDEVSGNHLHVCYIETKKNIADVMTKPLPIKTFKLLTNKWIH.

Polar residues-rich tracts occupy residues 1 to 10 (MESQQLSNYP), 48 to 60 (TKAN…TPAS), and 127 to 152 (QSQF…GNTF). 3 disordered regions span residues 1–84 (MESQ…QNGP), 126–174 (PQSQ…PPPM), and 390–459 (GSRN…SKST). A compositionally biased stretch (low complexity) spans 153–165 (TDSSSADSDMTST). The interval 337-439 (NNGIHINNKV…NSKSKTARAH (103 aa)) is RNA-binding. The span at 440–456 (NVSTSNNSPSTDNDSIS) shows a compositional bias: low complexity. Residue Asp499 is the For protease activity; shared with dimeric partner of the active site. The integrase-type zinc finger-like stretch occupies residues 621–678 (NVHTSESTRKYPYPFIHRMLAHANAQTIRYSLKNNTITYFNESDVDWSSAIDYQCPDC). The Integrase catalytic domain maps to 698–873 (NSYEPFQYLH…AGLDISTLLP (176 aa)). Residues Asp709 and Asp774 each coordinate Mg(2+). The interval 996–1208 (AVSPTDSTPP…SSLGGIGDSN (213 aa)) is disordered. Residues 998-1007 (SPTDSTPPST) show a composition bias toward low complexity. The span at 1043–1053 (STPQISDIEST) shows a compositional bias: polar residues. Positions 1076 to 1091 (ESSHASKSKDFRHSDS) are enriched in basic and acidic residues. Composition is skewed to polar residues over residues 1092-1120 (YSDN…QTSE) and 1133-1144 (SIDTSSSESNSL). The short motif at 1216-1250 (KKRSLEDNETEIKVSRDTWNTKNMRSLEPPRSKKR) is the Bipartite nuclear localization signal element. One can recognise a Reverse transcriptase Ty1/copia-type domain in the interval 1376–1514 (NNYYITQLDI…DILGLEIKYQ (139 aa)). Residues Asp1384, Asp1465, Asp1466, Asp1648, Glu1690, and Asp1723 each coordinate Mg(2+). In terms of domain architecture, RNase H Ty1/copia-type spans 1648-1790 (DASYGNQPYY…IKTFKLLTNK (143 aa)).

The capsid protein forms a homotrimer, from which the VLPs are assembled. The protease is a homodimer, whose active site consists of two apposed aspartic acid residues. In terms of processing, initially, virus-like particles (VLPs) are composed of the structural unprocessed proteins Gag and Gag-Pol, and also contain the host initiator methionine tRNA (tRNA(i)-Met) which serves as a primer for minus-strand DNA synthesis, and a dimer of genomic Ty RNA. Processing of the polyproteins occurs within the particle and proceeds by an ordered pathway, called maturation. First, the protease (PR) is released by autocatalytic cleavage of the Gag-Pol polyprotein yielding capsid protein p45 and a Pol-p154 precursor protein. This cleavage is a prerequisite for subsequent processing of Pol-p154 at the remaining sites to release the mature structural and catalytic proteins. Maturation takes place prior to the RT reaction and is required to produce transposition-competent VLPs.

It is found in the cytoplasm. Its subcellular location is the nucleus. The enzyme catalyses DNA(n) + a 2'-deoxyribonucleoside 5'-triphosphate = DNA(n+1) + diphosphate. It carries out the reaction Endonucleolytic cleavage to 5'-phosphomonoester.. Capsid protein (CA) is the structural component of the virus-like particle (VLP), forming the shell that encapsulates the retrotransposons dimeric RNA genome. The particles are assembled from trimer-clustered units and there are holes in the capsid shells that allow for the diffusion of macromolecules. CA also has nucleocapsid-like chaperone activity, promoting primer tRNA(i)-Met annealing to the multipartite primer-binding site (PBS), dimerization of Ty1 RNA and initiation of reverse transcription. Its function is as follows. The aspartyl protease (PR) mediates the proteolytic cleavages of the Gag and Gag-Pol polyproteins after assembly of the VLP. Functionally, reverse transcriptase/ribonuclease H (RT) is a multifunctional enzyme that catalyzes the conversion of the retro-elements RNA genome into dsDNA within the VLP. The enzyme displays a DNA polymerase activity that can copy either DNA or RNA templates, and a ribonuclease H (RNase H) activity that cleaves the RNA strand of RNA-DNA heteroduplexes during plus-strand synthesis and hydrolyzes RNA primers. The conversion leads to a linear dsDNA copy of the retrotransposon that includes long terminal repeats (LTRs) at both ends. In terms of biological role, integrase (IN) targets the VLP to the nucleus, where a subparticle preintegration complex (PIC) containing at least integrase and the newly synthesized dsDNA copy of the retrotransposon must transit the nuclear membrane. Once in the nucleus, integrase performs the integration of the dsDNA into the host genome. The protein is Transposon Ty1-H Gag-Pol polyprotein (TY1B-H) of Saccharomyces cerevisiae (strain ATCC 204508 / S288c) (Baker's yeast).